An 89-amino-acid chain; its full sequence is Small ribosomal subunit protein uS15 (89 aa).

It belongs to the universal ribosomal protein uS15 family. In terms of assembly, part of the 30S ribosomal subunit. Forms a bridge to the 50S subunit in the 70S ribosome, contacting the 23S rRNA.

In terms of biological role, one of the primary rRNA binding proteins, it binds directly to 16S rRNA where it helps nucleate assembly of the platform of the 30S subunit by binding and bridging several RNA helices of the 16S rRNA. Its function is as follows. Forms an intersubunit bridge (bridge B4) with the 23S rRNA of the 50S subunit in the ribosome. In Yersinia enterocolitica serotype O:8 / biotype 1B (strain NCTC 13174 / 8081), this protein is Small ribosomal subunit protein uS15.